The following is a 94-amino-acid chain: Large ribosomal subunit protein bL25 (94 aa).

The protein belongs to the bacterial ribosomal protein bL25 family. Part of the 50S ribosomal subunit; part of the 5S rRNA/L5/L18/L25 subcomplex. Contacts the 5S rRNA. Binds to the 5S rRNA independently of L5 and L18.

In terms of biological role, this is one of the proteins that binds to the 5S RNA in the ribosome where it forms part of the central protuberance. This Shigella boydii serotype 4 (strain Sb227) protein is Large ribosomal subunit protein bL25.